Consider the following 54-residue polypeptide: Small ribosomal subunit protein uS14 (54 aa).

Residues Cys-19, Cys-22, Cys-37, and Cys-40 each coordinate Zn(2+).

Belongs to the universal ribosomal protein uS14 family. Zinc-binding uS14 subfamily. In terms of assembly, part of the 30S ribosomal subunit. It depends on Zn(2+) as a cofactor.

Functionally, binds 16S rRNA, required for the assembly of 30S particles. The sequence is that of Small ribosomal subunit protein uS14 from Saccharolobus solfataricus (strain ATCC 35092 / DSM 1617 / JCM 11322 / P2) (Sulfolobus solfataricus).